The following is a 613-amino-acid chain: Dihydroxy-acid dehydratase (613 aa).

D81 contacts Mg(2+). Residue C122 coordinates [2Fe-2S] cluster. Residues D123 and K124 each contribute to the Mg(2+) site. An N6-carboxylysine modification is found at K124. Residue C197 participates in [2Fe-2S] cluster binding. E493 is a binding site for Mg(2+). S519 acts as the Proton acceptor in catalysis.

The protein belongs to the IlvD/Edd family. In terms of assembly, homodimer. [2Fe-2S] cluster is required as a cofactor. Mg(2+) serves as cofactor.

It catalyses the reaction (2R)-2,3-dihydroxy-3-methylbutanoate = 3-methyl-2-oxobutanoate + H2O. The catalysed reaction is (2R,3R)-2,3-dihydroxy-3-methylpentanoate = (S)-3-methyl-2-oxopentanoate + H2O. It functions in the pathway amino-acid biosynthesis; L-isoleucine biosynthesis; L-isoleucine from 2-oxobutanoate: step 3/4. Its pathway is amino-acid biosynthesis; L-valine biosynthesis; L-valine from pyruvate: step 3/4. Its function is as follows. Functions in the biosynthesis of branched-chain amino acids. Catalyzes the dehydration of (2R,3R)-2,3-dihydroxy-3-methylpentanoate (2,3-dihydroxy-3-methylvalerate) into 2-oxo-3-methylpentanoate (2-oxo-3-methylvalerate) and of (2R)-2,3-dihydroxy-3-methylbutanoate (2,3-dihydroxyisovalerate) into 2-oxo-3-methylbutanoate (2-oxoisovalerate), the penultimate precursor to L-isoleucine and L-valine, respectively. The polypeptide is Dihydroxy-acid dehydratase (Corynebacterium glutamicum (strain R)).